Consider the following 205-residue polypeptide: Methylamine utilization protein MauD (205 aa).

Residues Phe5–Leu25 traverse the membrane as a helical segment. Residues Pro50–Ser184 form the Thioredoxin domain.

It is found in the membrane. The protein operates within one-carbon metabolism; methylamine degradation. In terms of biological role, may be specifically involved in the processing, transport, and/or maturation of the MADH beta-subunit. In Methylorubrum extorquens (strain ATCC 14718 / DSM 1338 / JCM 2805 / NCIMB 9133 / AM1) (Methylobacterium extorquens), this protein is Methylamine utilization protein MauD (mauD).